A 1769-amino-acid chain; its full sequence is Tight junction protein 1 (1769 aa).

Residues 23-110 (TVTLHRAPGF…NAKITIRRKK (88 aa)) enclose the PDZ 1 domain. A compositionally biased stretch (basic residues) spans 102-112 (AKITIRRKKKV). Residues 102-188 (AKITIRRKKK…QPPKPTKVTL (87 aa)) form a disordered region. Residues 123 to 135 (PVSENEDSYDEEV) show a composition bias toward acidic residues. At S125 the chain carries Phosphoserine. Position 131 is a phosphotyrosine (Y131). A compositionally biased stretch (basic and acidic residues) spans 148 to 174 (RRSEKSWARDRSASRERSLSPRSDRRS). Phosphoserine is present on residues S174, S177, and S178. Position 184 is a phosphothreonine (T184). The 79-residue stretch at 185–263 (KVTLVKSRKN…KLKMVVQRDE (79 aa)) folds into the PDZ 2 domain. Phosphoserine is present on residues S211 and S240. The residue at position 266 (T266) is a Phosphothreonine. Residues S274, S276, S279, S283, S289, S293, S296, S299, S322, S328, S333, S336, and S352 each carry the phosphoserine modification. The tract at residues 295-362 (ASDHSGRSHD…TPVKHADDHT (68 aa)) is disordered. A compositionally biased stretch (basic and acidic residues) spans 298–326 (HSGRSHDRPPRHSRSRSPDQRSEPSDHSR). T353 carries the post-translational modification Phosphothreonine. Positions 420 to 501 (SMKLVKFRKG…GEEVTILAQK (82 aa)) constitute a PDZ 3 domain. The region spanning 515 to 583 (GDSFYIRTHF…PNKNRAEQLA (69 aa)) is the SH3 domain. Positions 609–790 (SKRNLRKSRE…WYGALKEAIQ (182 aa)) constitute a Guanylate kinase-like domain. Residues S616 and S621 each carry the phosphoserine modification. Positions 632–875 (YERVVLREAG…GTPPESAITR (244 aa)) are occludin (OCLN)-binding region. T808 carries the post-translational modification Phosphothreonine. Phosphoserine occurs at positions 809 and 820. The residue at position 821 (Y821) is a Phosphotyrosine. 3 positions are modified to phosphoserine: S823, S827, and S836. Disordered stretches follow at residues 824–976 (APGS…LRTP) and 1010–1067 (EMMR…SYTD). Residues T845, T847, T853, T860, and T867 each carry the phosphothreonine modification. Residues 878–891 (EPVREDSSGMHHEN) show a composition bias toward basic and acidic residues. Residues 892–905 (QTYPPYSPQAQPQP) show a composition bias toward low complexity. Position 911 is a phosphoserine (S911). Composition is skewed to polar residues over residues 933–952 (PETN…TLTN) and 962–976 (PSTS…LRTP). Phosphoserine is present on S967. Position 1070 is a phosphoserine (S1070). 3 disordered regions span residues 1091-1212 (SYYD…KAGH), 1224-1261 (PLIP…MKPQ), and 1273-1589 (KRSA…EFDS). Positions 1108–1124 (QHPRDLDSRQHPEESSE) are enriched in basic and acidic residues. A Phosphoserine modification is found at S1138. Y1139 and Y1164 each carry phosphotyrosine. Residues 1150-1370 (RTSTLRHEEQ…FDRRSFENKP (221 aa)) form an actin-binding region (ABR) region. Residues 1273 to 1286 (KRSASLENKKDENH) are compositionally biased toward basic and acidic residues. The span at 1300–1310 (PGAPIIGPKPT) shows a compositional bias: pro residues. The span at 1335-1346 (PPEDIVRSNHYD) shows a compositional bias: basic and acidic residues. Y1353 carries the post-translational modification Phosphotyrosine. S1365 is subject to Phosphoserine. Residues 1387–1401 (HSQNQTNFSSYSSKG) show a composition bias toward polar residues. Residues 1402–1419 (KSPEADAPDRSFGEKRYE) show a composition bias toward basic and acidic residues. S1412 bears the Phosphoserine mark. Polar residues-rich tracts occupy residues 1460–1471 (NSISLDFQNSLV) and 1514–1523 (AEQTQKTVTP). Residues 1539-1548 (PFERKFESPK) are compositionally biased toward basic and acidic residues. A phosphoserine mark is found at S1546 and S1618. The region spanning 1635–1769 (ATARGVFNNN…NCVSVLIDHF (135 aa)) is the ZU5 domain.

The protein belongs to the MAGUK family. As to quaternary structure, homodimer. Forms heterodimers TJP3. Forms a heterodimer (via PDZ2 domain) with TJP2/ZO2 (via PDZ2 domain). Interacts with OCLN. Interacts with CALM, claudins, CGN/cingulin, CXADR, GJA12, GJD3 and UBN1. Interacts (via ZU5 domain) with CDC42BPB and MYZAP. Interacts (via PDZ domain) with GJA1. Interacts (via PDZ domains) with ANKRD2. Interacts with POPDC1 (via the C-terminus cytoplasmic tail). Interacts with HSPA4. Interacts with KIRREL1. Interacts with DLL1. Interacts with USP53 (via the C-terminal region). Interacts with DNMBP (via C-terminal domain); required for the apical cell-cell junction localization of DNMBP. Interacts with SPEF1. Interacts (via N-terminus) with CTNNA1. Interacts with CLDN18. Interacts with CLDN16 (via TRV motif); this is a prerequisite for anchoring of CLDN16 at the tight junction. Interacts with PKP1; the interaction facilitates TJP1/ZO-1 localization to the plasma membrane. Interacts with PATJ (via PDZ1-6 domains); the interaction is required for attachment and extension of TJP1/ZO1 condensates along the apical cell interface. Phosphorylated at tyrosine redidues in response to epidermal growth factor (EGF). This response is dependent on an intact actin microfilament system. Dephosphorylated by PTPRJ.

It localises to the cell membrane. The protein localises to the cell junction. Its subcellular location is the tight junction. It is found in the gap junction. Functionally, TJP1, TJP2, and TJP3 are closely related scaffolding proteins that link tight junction (TJ) transmembrane proteins such as claudins, junctional adhesion molecules, and occludin to the actin cytoskeleton. Forms a multistranded TJP1/ZO1 condensate which elongates to form a tight junction belt, the belt is anchored at the apical cell membrane via interaction with PATJ. The tight junction acts to limit movement of substances through the paracellular space and as a boundary between the compositionally distinct apical and basolateral plasma membrane domains of epithelial and endothelial cells. Necessary for lumenogenesis, and particularly efficient epithelial polarization and barrier formation. Plays a role in the regulation of cell migration by targeting CDC42BPBb to the leading edge of migrating cells. With TJP2 and TJP3, participates in the junctional retention and stability of the transcription factor DBPA, but is not involved in its shuttling to the nucleus. May play a role in mediating cell morphology changes during ameloblast differentiation via its role in tight junctions. In Canis lupus familiaris (Dog), this protein is Tight junction protein 1.